The primary structure comprises 362 residues: tRNA-specific 2-thiouridylase MnmA (362 aa).

ATP is bound by residues 13 to 20 and M39; that span reads GLSGGVDS. The segment at 99–101 is interaction with target base in tRNA; that stretch reads NPD. The active-site Nucleophile is the C104. C104 and C200 form a disulfide bridge. Residue G128 coordinates ATP. Positions 150–152 are interaction with tRNA; it reads KDQ. C200 (cysteine persulfide intermediate) is an active-site residue.

Belongs to the MnmA/TRMU family.

Its subcellular location is the cytoplasm. The catalysed reaction is S-sulfanyl-L-cysteinyl-[protein] + uridine(34) in tRNA + AH2 + ATP = 2-thiouridine(34) in tRNA + L-cysteinyl-[protein] + A + AMP + diphosphate + H(+). Functionally, catalyzes the 2-thiolation of uridine at the wobble position (U34) of tRNA, leading to the formation of s(2)U34. This chain is tRNA-specific 2-thiouridylase MnmA, found in Coxiella burnetii (strain RSA 493 / Nine Mile phase I).